A 92-amino-acid chain; its full sequence is Small ribosomal subunit protein uS17 (92 aa).

The protein belongs to the universal ribosomal protein uS17 family. As to quaternary structure, part of the 30S ribosomal subunit.

One of the primary rRNA binding proteins, it binds specifically to the 5'-end of 16S ribosomal RNA. The protein is Small ribosomal subunit protein uS17 of Cupriavidus pinatubonensis (strain JMP 134 / LMG 1197) (Cupriavidus necator (strain JMP 134)).